A 108-amino-acid polypeptide reads, in one-letter code: Alkyltransferase-like protein 1 (108 aa).

This sequence belongs to the MGMT family. ATL subfamily.

Its function is as follows. Involved in DNA damage recognition. Binds DNA containing O(6)-methylguanine and larger O(6)-alkylguanine adducts. The DNA is bent, the damaged base is rotated out of the DNA duplex into a hydrophobic binding pocket (nucleotide flipping), with Arg-39 donating a hydrogen bond to the orphaned cytosine to stabilize the extrahelical DNA conformation. This structural change in DNA presents the lesion to the nucleotide excision repair (NER) pathway. The affinity for O(6)-alkylguanine adducts increases with the size of the alkyl group. Low affinity small O(6)-alkylguanines are directed to the global genome repair pathway of NER via rhp7-rhp16 and rhp41-rhp23, while strong binding to bulky O(6)-alkylguanines stalls the transcription machinery and diverts the damage to the transcription-coupled repair pathway of NER via rhp26. In Schizosaccharomyces pombe (strain 972 / ATCC 24843) (Fission yeast), this protein is Alkyltransferase-like protein 1.